A 411-amino-acid polypeptide reads, in one-letter code: Snake venom metalloproteinase VMP1 (411 aa).

An N-terminal signal peptide occupies residues 1 to 20 (MIQVLLVTICLAAFPYQGSS). A propeptide spanning residues 21–189 (IILESGNVND…KKAFQLNLTP (169 aa)) is cleaved from the precursor. Positions 197–393 (RYVELVIIAD…KNPQCILNKP (197 aa)) constitute a Peptidase M12B domain. Glu200 and Asp284 together coordinate Ca(2+). Disulfide bonds link Cys308–Cys388, Cys348–Cys372, and Cys350–Cys355. Residue Asn311 is glycosylated (N-linked (GlcNAc...) asparagine). His333 contributes to the Zn(2+) binding site. The active site involves Glu334. Zn(2+)-binding residues include His337 and His343. Residues Cys388, Asn391, Val403, Asn406, Leu408, and Glu410 each coordinate Ca(2+).

The protein belongs to the venom metalloproteinase (M12B) family. P-I subfamily. In terms of assembly, monomer. It depends on Zn(2+) as a cofactor. Expressed by the venom gland.

It localises to the secreted. Inhibited by EDTA and 1,10-phenanthroline, but not by PMSF. Its function is as follows. This venom zinc protease has fibrinolytic activity. The recombinant enzyme cleaves both alpha- (FGA) and beta-chains (FGB) of fibrinogen, but not the gamma-chain. The recombinant protein does not produce hemorrhage in mice and does not have effect on ADP- or collagen-stimulated platelet aggregation. In Agkistrodon piscivorus leucostoma (Western cottonmouth), this protein is Snake venom metalloproteinase VMP1.